The primary structure comprises 109 residues: MDDTIDDEVISAGSTITVEFSGGAETLFGGVREHVVPLDGSKIVLLEEMLRWLRDNLLTGDAGLFMQENTVRPGILVMINDTDWDLMGEIDYILQPGDHILFISTLHGG.

Gly-109 is modified (1-thioglycine). Gly-109 is covalently cross-linked (Glycyl lysine isopeptide (Gly-Lys) (interchain with K-? in acceptor proteins)).

The protein belongs to the URM1 family. In terms of processing, C-terminal thiocarboxylation occurs in 2 steps, it is first acyl-adenylated (-COAMP) via the hesA/moeB/thiF part of the MOCS3 homolog, then thiocarboxylated (-COSH) via the rhodanese domain of the MOCS3 homolog.

Its subcellular location is the cytoplasm. Its pathway is tRNA modification; 5-methoxycarbonylmethyl-2-thiouridine-tRNA biosynthesis. In terms of biological role, acts as a sulfur carrier required for 2-thiolation of mcm(5)S(2)U at tRNA wobble positions of cytosolic tRNA(Lys), tRNA(Glu) and tRNA(Gln). Serves as sulfur donor in tRNA 2-thiolation reaction by being thiocarboxylated (-COSH) at its C-terminus by MOCS3. The sulfur is then transferred to tRNA to form 2-thiolation of mcm(5)S(2)U. Also acts as a ubiquitin-like protein (UBL) that is covalently conjugated via an isopeptide bond to lysine residues of target proteins. The thiocarboxylated form serves as substrate for conjugation and oxidative stress specifically induces the formation of UBL-protein conjugates. The protein is Ubiquitin-related modifier 1 homolog of Culex quinquefasciatus (Southern house mosquito).